A 273-amino-acid polypeptide reads, in one-letter code: MTLDLQTTIEQAWENRANLSPVDASAEVRDAVEHTIDGLDLGRLRVAEKIDDQWIVHQWIKKAVLLSFRLHDNAVMGQGPLQFYDKVPTKFAGYGEAAFKAGGYRVVPPAVARRGAFIARNVVLMPSYVNIGAYVDEGTMVDTWATVGSCAQIGKNVHLSGGVGIGGVLEPLQANPTIIEDNCFIGARSEVVEGVVVEENSVLAMGVFLSQSTKIYDRATGKVSYGRVPSGSVVVPGSLPSEDGSHSLTCAVIVKRVDAQTRAKTSINDLLRA.

Substrate contacts are provided by Arg-105 and Asp-142.

The protein belongs to the transferase hexapeptide repeat family. As to quaternary structure, homotrimer.

Its subcellular location is the cytoplasm. It catalyses the reaction (S)-2,3,4,5-tetrahydrodipicolinate + succinyl-CoA + H2O = (S)-2-succinylamino-6-oxoheptanedioate + CoA. Its pathway is amino-acid biosynthesis; L-lysine biosynthesis via DAP pathway; LL-2,6-diaminopimelate from (S)-tetrahydrodipicolinate (succinylase route): step 1/3. The protein is 2,3,4,5-tetrahydropyridine-2,6-dicarboxylate N-succinyltransferase of Bordetella parapertussis (strain 12822 / ATCC BAA-587 / NCTC 13253).